The sequence spans 213 residues: 3-hexulose-6-phosphate synthase 2 (213 aa).

Belongs to the HPS/KGPDC family. HPS subfamily.

The enzyme catalyses D-ribulose 5-phosphate + formaldehyde = D-arabino-hex-3-ulose 6-phosphate. The protein operates within one-carbon metabolism; formaldehyde assimilation via RuMP pathway; D-fructose 6-phosphate from D-ribulose 5-phosphate and formaldehyde: step 1/2. Its function is as follows. Catalyzes the condensation of ribulose 5-phosphate with formaldehyde to form 3-hexulose 6-phosphate. In Staphylococcus saprophyticus subsp. saprophyticus (strain ATCC 15305 / DSM 20229 / NCIMB 8711 / NCTC 7292 / S-41), this protein is 3-hexulose-6-phosphate synthase 2.